We begin with the raw amino-acid sequence, 238 residues long: MPTFSLWLPAGSNNVHPCGDPYAHHLFMRCLYHAKHDPTMKFDVKTTNVNKTSQEFKNTGLRRMPGISAEESGETQTFETEDDILDFLEYLKPERGDDEEAENATCDLFRQFARFVKDVEHRDTAFNTELLRLDKYLSEQETKFLISDDVTHIDCLVLTRLHSIRVAAKMLKNYEIPADLSHVLDYLKAGYATEMFRVSCPSDQEIVLHWTELKDTPRLSAKDRAKLVREEPVFSFSV.

Belongs to the chloride channel CLIC family. In terms of tissue distribution, expressed in the intestine, neurons and muscles.

Its subcellular location is the cytoplasm. The protein localises to the membrane. The protein resides in the lysosome membrane. It localises to the golgi apparatus membrane. Probable chloride channel. The chain is Chloride intracellular channel exl-1 (exl-1) from Caenorhabditis elegans.